Consider the following 37-residue polypeptide: Cytochrome b6-f complex subunit 5 (37 aa).

The chain crosses the membrane as a helical span at residues 5–25 (LLFGIVLGLIPITLAGLFVTA).

The protein belongs to the PetG family. The 4 large subunits of the cytochrome b6-f complex are cytochrome b6, subunit IV (17 kDa polypeptide, PetD), cytochrome f and the Rieske protein, while the 4 small subunits are PetG, PetL, PetM and PetN. The complex functions as a dimer.

It localises to the plastid. Its subcellular location is the chloroplast thylakoid membrane. Component of the cytochrome b6-f complex, which mediates electron transfer between photosystem II (PSII) and photosystem I (PSI), cyclic electron flow around PSI, and state transitions. PetG is required for either the stability or assembly of the cytochrome b6-f complex. The polypeptide is Cytochrome b6-f complex subunit 5 (Lemna minor (Common duckweed)).